A 113-amino-acid polypeptide reads, in one-letter code: Tyrosine-protein phosphatase 15 (113 aa).

The Tyrosine-protein phosphatase domain maps to 1–113 (WRMVYDNNVN…RSTGDGVALI (113 aa)).

The protein belongs to the protein-tyrosine phosphatase family.

It carries out the reaction O-phospho-L-tyrosyl-[protein] + H2O = L-tyrosyl-[protein] + phosphate. This chain is Tyrosine-protein phosphatase 15 (STY-15), found in Styela plicata (Wrinkled sea squirt).